A 98-amino-acid chain; its full sequence is NADH-ubiquinone oxidoreductase chain 4L (98 aa).

The next 2 helical transmembrane spans lie at leucine 26–leucine 46 and isoleucine 61–isoleucine 81.

This sequence belongs to the complex I subunit 4L family. As to quaternary structure, core subunit of respiratory chain NADH dehydrogenase (Complex I) which is composed of 45 different subunits.

The protein localises to the mitochondrion inner membrane. The enzyme catalyses a ubiquinone + NADH + 5 H(+)(in) = a ubiquinol + NAD(+) + 4 H(+)(out). In terms of biological role, core subunit of the mitochondrial membrane respiratory chain NADH dehydrogenase (Complex I) which catalyzes electron transfer from NADH through the respiratory chain, using ubiquinone as an electron acceptor. Part of the enzyme membrane arm which is embedded in the lipid bilayer and involved in proton translocation. The polypeptide is NADH-ubiquinone oxidoreductase chain 4L (MT-ND4L) (Macaca nigrescens (Gorontalo macaque)).